The chain runs to 453 residues: MAKVYWPYFDPEYENLSSRINPPSVSIDNTSCKECTLVKVDSMNKPGILLEVVQVLTDLDLTITKAYISSDGGWFMDVFHVTDQQGNKVTDSKTIDYIEKVLGPKGHASASQNTWPGKRVGVHSLGDHTSIEIIARDRPGLLSEVSAVLADLNINVVAAEAWTHNRRIACVLYVNDNATSRAVDDPERLSSMEEQLNNVLRGCEEQDEKFARTSLSIGSTHVDRRLHQMFFADRDYEAVTKLDDSASCGFEPKITVEHCEEKGYSVINVSCEDRPKLMFDIVCTLTDMQYIVFHATISSSGSHASQEYFIRHKDGCTLDTEGEKERVVKCLEAAIHRRVSEGWSLELCAKDRVGLLSEVTRILREHGLSVSRAGVTTVGEQAVNVFYVKDASGNPVDVKTIEALRGEIGHSMMIDFKNKVPSRKWKEEGQAGTGGGWAKTSFFFGNLLEKLLP.

ACT domains follow at residues 37–112 (LVKV…SASQ), 130–212 (SIEI…KFAR), 266–341 (VINV…RVSE), and 344–423 (SLEL…VPSR).

As to expression, expressed in roots, cotyledons, rosette and cauline leaves, sepals, style, and pedicels and tips of young developing siliques.

In terms of biological role, may bind amino acids. The chain is ACT domain-containing protein ACR3 from Arabidopsis thaliana (Mouse-ear cress).